The following is a 483-amino-acid chain: Trigger factor (483 aa).

The PPIase FKBP-type domain occupies 162–243 (GDYVSLDLSA…VRGVKEKELP (82 aa)). Residues 459–483 (AVAPGDGDATVEPVEPVEAETDGNG) form a disordered region. A compositionally biased stretch (acidic residues) spans 473 to 483 (EPVEAETDGNG).

This sequence belongs to the FKBP-type PPIase family. Tig subfamily.

The protein resides in the cytoplasm. It carries out the reaction [protein]-peptidylproline (omega=180) = [protein]-peptidylproline (omega=0). Involved in protein export. Acts as a chaperone by maintaining the newly synthesized protein in an open conformation. Functions as a peptidyl-prolyl cis-trans isomerase. The protein is Trigger factor of Frankia casuarinae (strain DSM 45818 / CECT 9043 / HFP020203 / CcI3).